The chain runs to 344 residues: Arginine N-succinyltransferase (344 aa).

Leu125 is a succinyl-CoA binding site. The active-site Proton donor is the His229.

The protein belongs to the arginine N-succinyltransferase family.

It catalyses the reaction succinyl-CoA + L-arginine = N(2)-succinyl-L-arginine + CoA + H(+). It participates in amino-acid degradation; L-arginine degradation via AST pathway; L-glutamate and succinate from L-arginine: step 1/5. Its function is as follows. Catalyzes the transfer of succinyl-CoA to arginine to produce N(2)-succinylarginine. This chain is Arginine N-succinyltransferase, found in Salmonella typhi.